The sequence spans 227 residues: General transcription factor 3C polypeptide 6 (227 aa).

Residues 157–227 (DEAAGPASDK…DGNVSQNNQS (71 aa)) are disordered. Positions 186–195 (EQEKVEHSEV) are enriched in basic and acidic residues. Positions 203-227 (ETPSEMESSVFMGTQDGNVSQNNQS) are enriched in polar residues.

The protein belongs to the TFIIIC subunit 6 family. In terms of assembly, part of the TFIIIC subcomplex TFIIIC2, consisting of six subunits, GTF3C1, GTF3C2, GTF3C3, GTF3C4, GTF3C5 and GTF3C6. Interacts with GTF3C4 and GTF3C5.

It localises to the nucleus. Functionally, involved in RNA polymerase III-mediated transcription. Integral, tightly associated component of the DNA-binding TFIIIC2 subcomplex that directly binds tRNA and virus-associated RNA promoters. The polypeptide is General transcription factor 3C polypeptide 6 (Mus musculus (Mouse)).